The following is a 102-amino-acid chain: ATP-dependent Clp protease adapter protein ClpS (102 aa).

This sequence belongs to the ClpS family. In terms of assembly, binds to the N-terminal domain of the chaperone ClpA.

Involved in the modulation of the specificity of the ClpAP-mediated ATP-dependent protein degradation. The polypeptide is ATP-dependent Clp protease adapter protein ClpS (Shewanella oneidensis (strain ATCC 700550 / JCM 31522 / CIP 106686 / LMG 19005 / NCIMB 14063 / MR-1)).